The primary structure comprises 290 residues: uncharacterized protein (290 aa).

This is an uncharacterized protein from Escherichia coli (strain K12).